An 850-amino-acid chain; its full sequence is Transcription initiation factor TFIID subunit 4B (850 aa).

The tract at residues 99–240 (GTTTIQLPAN…TPSNDARLKA (142 aa)) is sufficient for interaction with ZNF628. The 98-residue stretch at 256-353 (ENVKKCKNFL…VKEVSGDVVI (98 aa)) folds into the TAFH domain. The required for interaction with P65/RELA stretch occupies residues 504-526 (PSTLLPQAAGIPQTAKVKQLVVQ). A Nuclear export signal motif is present at residues 509 to 549 (PQAAGIPQTAKVKQLVVQQPSGSSVNHVTSISHSSPLSTQN). Residue serine 584 is modified to Phosphoserine. The Histone-fold domain occupies 642–691 (PFLVIGALQKRILDIGKKHDITELNSDAVNLISHATQERLRGLLEKLTTI). A disordered region spans residues 788–812 (KRPLESGNESFKDNPSTSGTSSLTA). Polar residues predominate over residues 794 to 812 (GNESFKDNPSTSGTSSLTA). The tract at residues 818-850 (PRITRICLRDLIFCMEQEREMKYSRALYLALLK) is required for interaction with TAF12.

The protein belongs to the TAF4 family. In terms of assembly, TFIID is composed of TATA binding protein (TBP) and a number of TBP-associated factors (TAFs). Heterodimerizes with TAF12/TFII20 via the C-terminal H2A-like histone-fold domain. This heterodimer forms a histone-like octamer with the TAF6/TAFII70-TAF9/TAFII31 heterodimer. Interacts with P65/RELA homodimers and P65/RELA-REL heterodimers. Interaction with POU2AF1, via its C-terminal activation domain, is required for octamer-dependent transcription. Interacts with ZNF628. In terms of tissue distribution, highly expressed in the testes and ovary, whereas lower levels are detected in most other tissues.

Its subcellular location is the nucleus. It localises to the cytoplasm. Functionally, cell type-specific subunit of the general transcription factor TFIID that may function as a gene-selective coactivator in certain cells. TFIID is a multimeric protein complex that plays a central role in mediating promoter responses to various activators asond repressors. TAF4B is a transcriptional coactivator of the p65/RELA NF-kappa-B subunit. Involved in the activation of a subset of antiapoptotic genes including TNFAIP3. Through interaction with OCBA/POU2AF1, acts as a coactivator of B-cell-specific transcription. Plays a role in spermiogenesis and oogenesis. In Mus musculus (Mouse), this protein is Transcription initiation factor TFIID subunit 4B (Taf4b).